A 368-amino-acid chain; its full sequence is Probable pectate lyase 4 (368 aa).

A signal peptide spans 1-25 (MASLVVIVSLLLAAFASPLLETAHS). The N-linked (GlcNAc...) asparagine glycan is linked to Asn-27. Ca(2+) contacts are provided by Asp-167, Asp-191, and Asp-195. Residue Arg-247 is part of the active site.

This sequence belongs to the polysaccharide lyase 1 family. Requires Ca(2+) as cofactor.

It carries out the reaction Eliminative cleavage of (1-&gt;4)-alpha-D-galacturonan to give oligosaccharides with 4-deoxy-alpha-D-galact-4-enuronosyl groups at their non-reducing ends.. The protein operates within glycan metabolism; pectin degradation; 2-dehydro-3-deoxy-D-gluconate from pectin: step 2/5. The polypeptide is Probable pectate lyase 4 (Arabidopsis thaliana (Mouse-ear cress)).